A 146-amino-acid polypeptide reads, in one-letter code: Small ribosomal subunit protein uS9x (146 aa).

The protein belongs to the universal ribosomal protein uS9 family.

It is found in the cytoplasm. The polypeptide is Small ribosomal subunit protein uS9x (RPS16C) (Arabidopsis thaliana (Mouse-ear cress)).